Consider the following 907-residue polypeptide: Interference hedgehog (907 aa).

An N-terminal signal peptide occupies residues 1–23 (MSLTRRFSLTLLLLLPLLTSLLA). Residues 24 to 709 (AIPVLQANLS…SHNETFNMNP (686 aa)) are Extracellular-facing. Ig-like C2-type domains are found at residues 42–149 (PGVR…ASIS), 152–233 (GADT…VRLA), 252–340 (PALL…FIEL), and 346–433 (PRIL…LQVN). Cystine bridges form between Cys65–Cys127, Cys173–Cys221, and Cys276–Cys324. Asn101, Asn203, Asn300, and Asn355 each carry an N-linked (GlcNAc...) asparagine glycan. Cys367 and Cys415 are joined by a disulfide. Positions 427–474 (GTLLQVNPKQLPDGEGTGMDSGRSSARPTHSRKQKQQTQMVPPSAPNV) are disordered. Over residues 462–474 (QQTQMVPPSAPNV) the composition is skewed to polar residues. Fibronectin type-III domains follow at residues 468-578 (PPSA…LQRG) and 586-681 (VPEL…TQRP). N-linked (GlcNAc...) asparagine glycosylation occurs at Asn473. Heparin is bound by residues Arg504, Lys511, and Lys513. Asn537 and Asn548 each carry an N-linked (GlcNAc...) asparagine glycan. Arg552 is a heparin binding site. Asn568 carries N-linked (GlcNAc...) asparagine glycosylation. Over residues 676-688 (GRTQRPRASSTPQ) the composition is skewed to polar residues. The interval 676-701 (GRTQRPRASSTPQPVLHAVDTTTPSH) is disordered. Asn702 carries N-linked (GlcNAc...) asparagine glycosylation. Residues 710–730 (MLTGTIGGGALLVLLVISACL) traverse the membrane as a helical segment. Topologically, residues 731–907 (CLCRRRSSRG…SSGSLNSVGV (177 aa)) are cytoplasmic. Disordered stretches follow at residues 780-805 (AQQQQQQQQQQLQQQQHDEKEAQDND) and 829-881 (MSSS…NKPG). Composition is skewed to low complexity over residues 781-794 (QQQQQQQQQQLQQQ) and 853-863 (NNNNLNQPGDG). Polar residues predominate over residues 865-878 (LANSADSPRLQASN).

This sequence belongs to the immunoglobulin superfamily. IHOG family. In terms of assembly, homodimer. Heterotetramer; 2 iHog chains bind 2 hh chains when facilitated by heparin, heparin is required to promote high-affinity interactions between hh and iHog.

The protein localises to the membrane. Mediates response to the active Hedgehog (Hh) protein signal in embryos, functioning upstream or at the level of patched (ptc). In Drosophila virilis (Fruit fly), this protein is Interference hedgehog.